We begin with the raw amino-acid sequence, 69 residues long: Small, acid-soluble spore protein C4 (69 aa).

It belongs to the alpha/beta-type SASP family.

SASP are bound to spore DNA. They are double-stranded DNA-binding proteins that cause DNA to change to an a-like conformation. They protect the DNA backbone from chemical and enzymatic cleavage and are thus involved in dormant spore's high resistance to UV light. In Priestia megaterium (Bacillus megaterium), this protein is Small, acid-soluble spore protein C4 (SASP-C4).